A 133-amino-acid polypeptide reads, in one-letter code: Small heat shock protein ibp (133 aa).

One can recognise a sHSP domain in the interval Glu-11–Glu-126.

Belongs to the small heat shock protein (HSP20) family.

The protein is Small heat shock protein ibp (ibp) of Wigglesworthia glossinidia brevipalpis.